We begin with the raw amino-acid sequence, 372 residues long: MTDTTLAPEVTLSDLPLREELRGESAYGAPQLNVSVRLNTNENPYPPSEALIADLVETVRATATELNRYPERDSVELRDALADYITHQTGVQVTRENLWAANGSNEVLQQLLQAFGGPGRKALGFQPSYSMHPILSKGTQTEFIAIPRGADFRIDMDAALAAIEEHVPDIIFVTTPNNPTGDITSLADIEKIINAAPGIVIVDEAYAEFSPSPSATTLITRYPAKLVVSRTMSKAFDFAGGRLGYFVAAPAFIEAVMLVRLPYHLSALSQAAATVALRHRDDTLATVAKLSSERIRVAARLEELGYTQVPSESNFIFFGKFTDQHTAWEAFLDRGVLIRDVGVSGHLRVTIGLPEENDSFLAAAAEISGLNL.

Residue lysine 234 is modified to N6-(pyridoxal phosphate)lysine.

The protein belongs to the class-II pyridoxal-phosphate-dependent aminotransferase family. Histidinol-phosphate aminotransferase subfamily. As to quaternary structure, homodimer. Pyridoxal 5'-phosphate is required as a cofactor.

It carries out the reaction L-histidinol phosphate + 2-oxoglutarate = 3-(imidazol-4-yl)-2-oxopropyl phosphate + L-glutamate. Its pathway is amino-acid biosynthesis; L-histidine biosynthesis; L-histidine from 5-phospho-alpha-D-ribose 1-diphosphate: step 7/9. This Corynebacterium efficiens (strain DSM 44549 / YS-314 / AJ 12310 / JCM 11189 / NBRC 100395) protein is Histidinol-phosphate aminotransferase (hisC).